The chain runs to 962 residues: Putative primase C962R (962 aa).

Positions 607-775 (ELDARLWIMF…PDPGNPYEKK (169 aa)) constitute an SF3 helicase domain. An ATP-binding site is contributed by 636 to 643 (GGGCNGKT).

This sequence belongs to the asfivirus helicase C962R family.

This is Putative primase C962R from African swine fever virus (strain Badajoz 1971 Vero-adapted) (Ba71V).